The primary structure comprises 149 residues: MKLTDYVKQVSLEDFGRAFIHHVQWNRRLRSTGGRFFPKDGHLDFNPKVYQKLGMEVFRKIVRHELCHYHLYFQGKGYQHKDRDFKELLKAVDGLRFVPSLPNSNSKPLKLYRCQSCQQRYQRKRRIDTKRYRCGLCRGKLLLINQPED.

One can recognise a SprT-like domain in the interval D5–L143. H64 is a binding site for Zn(2+). Residue E65 is part of the active site. A Zn(2+)-binding site is contributed by H68.

It belongs to the SprT family. It depends on Zn(2+) as a cofactor.

It localises to the cytoplasm. The polypeptide is Protein SprT-like (Streptococcus pneumoniae (strain Hungary19A-6)).